The primary structure comprises 196 residues: Putative 3-methyladenine DNA glycosylase (196 aa).

The protein belongs to the DNA glycosylase MPG family.

This Bacillus subtilis (strain 168) protein is Putative 3-methyladenine DNA glycosylase (yxlJ).